Here is a 198-residue protein sequence, read N- to C-terminus: Na(+)-translocating NADH-quinone reductase subunit E (198 aa).

6 helical membrane passes run 11-31, 35-55, 77-97, 110-130, 140-160, and 176-196; these read SVFIENMALSFFLGMCTFLAV, VSTSFGLGIAVIVVLGIAVPV, FLNFITFIGVIAALVQILEMF, GIFLPLITVNCAIFGGVSFMV, VVYGIGAGTGWMLAIVALAGL, and LGITFITVGLMALGFMSFSGI.

This sequence belongs to the NqrDE/RnfAE family. As to quaternary structure, composed of six subunits; NqrA, NqrB, NqrC, NqrD, NqrE and NqrF.

The protein localises to the cell inner membrane. The enzyme catalyses a ubiquinone + n Na(+)(in) + NADH + H(+) = a ubiquinol + n Na(+)(out) + NAD(+). In terms of biological role, NQR complex catalyzes the reduction of ubiquinone-1 to ubiquinol by two successive reactions, coupled with the transport of Na(+) ions from the cytoplasm to the periplasm. NqrA to NqrE are probably involved in the second step, the conversion of ubisemiquinone to ubiquinol. The chain is Na(+)-translocating NADH-quinone reductase subunit E from Actinobacillus succinogenes (strain ATCC 55618 / DSM 22257 / CCUG 43843 / 130Z).